The following is a 155-amino-acid chain: Putative pre-16S rRNA nuclease (155 aa).

The protein belongs to the YqgF nuclease family.

The protein localises to the cytoplasm. Could be a nuclease involved in processing of the 5'-end of pre-16S rRNA. The sequence is that of Putative pre-16S rRNA nuclease from Xanthomonas euvesicatoria pv. vesicatoria (strain 85-10) (Xanthomonas campestris pv. vesicatoria).